We begin with the raw amino-acid sequence, 443 residues long: MSHTMTPSEIVSELDKHIIGQNKAKKAVAVALRNRWRRQQVAEPLRQEITPKNILMIGPTGVGKTEIARRLAKLADAPFIKIEATKFTEVGYVGRDVDTIVRDLAEMAIKQTRESEMKKVRTKAEDAAEDRLLDVLLPPPRDIGFSQPEEKDSNTRQVFRKKLREGQLDDKDIELEVSAGMPSMDIMGPPGMEDMTEQIRTMFAGLGQGKKARRKMKVKEAFKLLIDEEAAKLVNDEELKHKAIANVEQNGIVFLDEIDKIASRSDIGGGEVSRQGVQRDLLPLVEGTTVNTKYGMIKTDHILFIASGAFHLSKPSDLIPELQGRFPIRVELESLSVQDFEAILTQTDASLTKQYQALLNTEEVNLVFAPDGIRRLAEIAFSVNEKVENIGARRLYTVMERLLEDLSFHASKSSGETVTIDAAYVEERLGDLAGNEDLSRYVL.

Residues isoleucine 19 and 61-66 (GVGKTE) contribute to the ATP site. Positions 139 to 158 (PPRDIGFSQPEEKDSNTRQV) are disordered. Positions 256, 321, and 393 each coordinate ATP.

The protein belongs to the ClpX chaperone family. HslU subfamily. A double ring-shaped homohexamer of HslV is capped on each side by a ring-shaped HslU homohexamer. The assembly of the HslU/HslV complex is dependent on binding of ATP.

Its subcellular location is the cytoplasm. Functionally, ATPase subunit of a proteasome-like degradation complex; this subunit has chaperone activity. The binding of ATP and its subsequent hydrolysis by HslU are essential for unfolding of protein substrates subsequently hydrolyzed by HslV. HslU recognizes the N-terminal part of its protein substrates and unfolds these before they are guided to HslV for hydrolysis. In Cupriavidus taiwanensis (strain DSM 17343 / BCRC 17206 / CCUG 44338 / CIP 107171 / LMG 19424 / R1) (Ralstonia taiwanensis (strain LMG 19424)), this protein is ATP-dependent protease ATPase subunit HslU.